A 417-amino-acid polypeptide reads, in one-letter code: Serine--tRNA ligase (417 aa).

An L-serine-binding site is contributed by threonine 226 to glutamate 228. Residues arginine 257 to glutamate 259 and valine 273 each bind ATP. Glutamate 280 is a binding site for L-serine. ATP is bound at residue glutamate 344–serine 347. L-serine is bound at residue threonine 379.

Belongs to the class-II aminoacyl-tRNA synthetase family. Type-1 seryl-tRNA synthetase subfamily. In terms of assembly, homodimer. The tRNA molecule binds across the dimer.

The protein resides in the cytoplasm. It carries out the reaction tRNA(Ser) + L-serine + ATP = L-seryl-tRNA(Ser) + AMP + diphosphate + H(+). The catalysed reaction is tRNA(Sec) + L-serine + ATP = L-seryl-tRNA(Sec) + AMP + diphosphate + H(+). It functions in the pathway aminoacyl-tRNA biosynthesis; selenocysteinyl-tRNA(Sec) biosynthesis; L-seryl-tRNA(Sec) from L-serine and tRNA(Sec): step 1/1. Functionally, catalyzes the attachment of serine to tRNA(Ser). Is also able to aminoacylate tRNA(Sec) with serine, to form the misacylated tRNA L-seryl-tRNA(Sec), which will be further converted into selenocysteinyl-tRNA(Sec). This is Serine--tRNA ligase from Mycobacterium sp. (strain KMS).